A 307-amino-acid chain; its full sequence is GTPase Era (307 aa).

The region spanning 17–186 is the Era-type G domain; sequence RCGFVAIVGR…LELIKPYLPE (170 aa). The tract at residues 25-32 is G1; sequence GRPNVGKS. Residue 25 to 32 coordinates GTP; the sequence is GRPNVGKS. Residues 51–55 are G2; sequence QTTRN. The tract at residues 72–75 is G3; it reads DTPG. GTP contacts are provided by residues 72 to 76 and 133 to 136; these read DTPGF and NKID. Residues 133 to 136 form a G4 region; it reads NKID. The interval 165–167 is G5; that stretch reads VSA. Positions 217–293 constitute a KH type-2 domain; it reads LGEELPYAMN…FLKVWVKVKS (77 aa).

This sequence belongs to the TRAFAC class TrmE-Era-EngA-EngB-Septin-like GTPase superfamily. Era GTPase family. Monomer.

It is found in the cytoplasm. The protein resides in the cell inner membrane. In terms of biological role, an essential GTPase that binds both GDP and GTP, with rapid nucleotide exchange. Plays a role in 16S rRNA processing and 30S ribosomal subunit biogenesis and possibly also in cell cycle regulation and energy metabolism. In Neisseria meningitidis serogroup B (strain ATCC BAA-335 / MC58), this protein is GTPase Era.